The sequence spans 300 residues: Ribosomal protein L11 methyltransferase (300 aa).

4 residues coordinate S-adenosyl-L-methionine: T152, G173, D195, and N234.

It belongs to the methyltransferase superfamily. PrmA family.

It localises to the cytoplasm. It carries out the reaction L-lysyl-[protein] + 3 S-adenosyl-L-methionine = N(6),N(6),N(6)-trimethyl-L-lysyl-[protein] + 3 S-adenosyl-L-homocysteine + 3 H(+). Methylates ribosomal protein L11. This is Ribosomal protein L11 methyltransferase from Burkholderia pseudomallei (strain K96243).